The following is a 180-amino-acid chain: Ribosome maturation factor RimM (180 aa).

The 73-residue stretch at 97–169 (PGELSWDFFV…IITVDLPEGL (73 aa)) folds into the PRC barrel domain.

This sequence belongs to the RimM family. In terms of assembly, binds ribosomal protein uS19.

Its subcellular location is the cytoplasm. In terms of biological role, an accessory protein needed during the final step in the assembly of 30S ribosomal subunit, possibly for assembly of the head region. Essential for efficient processing of 16S rRNA. May be needed both before and after RbfA during the maturation of 16S rRNA. It has affinity for free ribosomal 30S subunits but not for 70S ribosomes. In Bacteroides fragilis (strain YCH46), this protein is Ribosome maturation factor RimM.